We begin with the raw amino-acid sequence, 675 residues long: DNA ligase 1 (675 aa).

NAD(+) is bound by residues 34 to 38 (DFEYD), 83 to 84 (SL), and Glu-114. Lys-116 functions as the N6-AMP-lysine intermediate in the catalytic mechanism. 4 residues coordinate NAD(+): Arg-137, Glu-177, Lys-295, and Lys-319. The Zn(2+) site is built by Cys-413, Cys-416, Cys-431, and Cys-436. The BRCT domain maps to 596-675 (NSGSALAGKT…AEFLRLLSGG (80 aa)).

Belongs to the NAD-dependent DNA ligase family. LigA subfamily. The cofactor is Mg(2+). Requires Mn(2+) as cofactor.

The enzyme catalyses NAD(+) + (deoxyribonucleotide)n-3'-hydroxyl + 5'-phospho-(deoxyribonucleotide)m = (deoxyribonucleotide)n+m + AMP + beta-nicotinamide D-nucleotide.. In terms of biological role, DNA ligase that catalyzes the formation of phosphodiester linkages between 5'-phosphoryl and 3'-hydroxyl groups in double-stranded DNA using NAD as a coenzyme and as the energy source for the reaction. It is essential for DNA replication and repair of damaged DNA. This chain is DNA ligase 1, found in Opitutus terrae (strain DSM 11246 / JCM 15787 / PB90-1).